The following is a 132-amino-acid chain: UPF0299 membrane protein YohJ (132 aa).

Transmembrane regions (helical) follow at residues 7–27, 31–51, 63–83, and 93–113; these read IIWQYLRAFVLIYACLYAGIF, LLPVTIPGSIIGMLILFVLLA, GCYVLIRYMALLFVPIGVGVM, and FGPVVVSCAVCTLVVFLVVSW.

The protein belongs to the UPF0299 family.

It is found in the cell inner membrane. This Shigella boydii serotype 18 (strain CDC 3083-94 / BS512) protein is UPF0299 membrane protein YohJ.